A 300-amino-acid polypeptide reads, in one-letter code: Haloalkane dehalogenase 1 (300 aa).

An AB hydrolase-1 domain is found at 47–176 (PPIVLLHGEP…FARYSPVLPA (130 aa)). The Nucleophile role is filled by Asp-123. The active-site Proton donor is Asp-250. His-279 acts as the Proton acceptor in catalysis.

Belongs to the haloalkane dehalogenase family. Type 1 subfamily. As to quaternary structure, monomer.

It carries out the reaction 1-haloalkane + H2O = a halide anion + a primary alcohol + H(+). Its function is as follows. Catalyzes hydrolytic cleavage of carbon-halogen bonds in halogenated aliphatic compounds, leading to the formation of the corresponding primary alcohols, halide ions and protons. This chain is Haloalkane dehalogenase 1 (dhmA1), found in Mycobacterium bovis (strain ATCC BAA-935 / AF2122/97).